The chain runs to 142 residues: Large ribosomal subunit protein uL13 (142 aa).

Belongs to the universal ribosomal protein uL13 family. Part of the 50S ribosomal subunit.

Its function is as follows. This protein is one of the early assembly proteins of the 50S ribosomal subunit, although it is not seen to bind rRNA by itself. It is important during the early stages of 50S assembly. The sequence is that of Large ribosomal subunit protein uL13 from Vibrio cholerae serotype O1 (strain M66-2).